A 154-amino-acid chain; its full sequence is Aspartate carbamoyltransferase regulatory chain (154 aa).

Positions 109, 114, 138, and 141 each coordinate Zn(2+).

It belongs to the PyrI family. As to quaternary structure, contains catalytic and regulatory chains. It depends on Zn(2+) as a cofactor.

Its function is as follows. Involved in allosteric regulation of aspartate carbamoyltransferase. In Serratia proteamaculans (strain 568), this protein is Aspartate carbamoyltransferase regulatory chain.